The chain runs to 623 residues: MAGPGAPCDPCAPAAVWKRHIVRQLRHRDRTQKALFLELVPAYNHLLEKAELLAKFSEKLKSEPKDAISTRHEDWREEVSGTGPDQVSSPASLRVKWQQEKKGLQLVCGEMAYQVVKKSAALDTLQSQLEERQDRLEALQACVVQLQEARAQQSRQLEERQAENAAQREAYETLLQQAVHQEAALRRLQEEARDLLEQLVQRKARAAAERNLRNERRERANQALVSQELKKAAKRTVSISEIPNTLEDGTKEETVALAPAALPEFSESETCEKWKRPFRSASATSLTLSRCVDVVKGLLDFKKRRGHSVGGAPEQRYQSIPVCVSAQIPSQAQDVLDAHLSEVNAVCFGPNSSLLATGGADRLIHLWNVVGGRLEANQTLEGAGGSITSVDFDPSGSQVLAATYNQAAQLWKVGETQSKETLSGHKDKVTAAKFKLTRHQAVTGSRDRTVKEWDLGRAYCSRTINVLSYCNDVVCGDHIIISGHNDQKIRFWDSRGPHCIQVIPVQGRVTSLHLSYDQLHLLSCSRDNTLKVIDLRISNIRQVFRADGFKCSSDWTKAVFSPDRSYALAGSSNGDLYIWDVNTGKLETSLQGPHCTAVNAVAWCFSGNHVVSVDQGRKVVLWH.

A compositionally biased stretch (basic and acidic residues) spans 64–79 (PKDAISTRHEDWREEV). A disordered region spans residues 64-93 (PKDAISTRHEDWREEVSGTGPDQVSSPASL). Positions 116–229 (VKKSAALDTL…ANQALVSQEL (114 aa)) form a coiled coil. WD repeat units lie at residues 338–377 (AHLS…LEAN), 382–421 (GAGG…SKET), 424–458 (GHKD…LGRA), 459–502 (YCSR…CIQV), 504–543 (PVQG…IRQV), 550–589 (KCSS…LETS), and 593–623 (PHCT…VLWH).

Belongs to the WD repeat ATG16 family. Homooligomer. Heterooligomer with ATG16L2. Interacts with ATG5. Self-oligomerizes to form a 800-kDa complex composed of ATG12-ATG5 and ATG16L2. Interacts with RAB33B. Widely expressed.

It is found in the cytoplasm. The protein localises to the cytosol. In terms of biological role, may play a role in regulating epithelial homeostasis in an ATG16L1-dependent manner. The protein is Protein Atg16l2 (Atg16l2) of Mus musculus (Mouse).